We begin with the raw amino-acid sequence, 441 residues long: Protein kinase C and casein kinase substrate in neurons protein 1 (441 aa).

2 positions are modified to phosphoserine: S2 and S76. Residues 10 to 280 (EEITDSFWEV…AIRGADAQED (271 aa)) form the F-BAR domain. Residues 23 to 272 (KRTVKRIDDG…HVYRELEQAI (250 aa)) adopt a coiled-coil conformation. Phosphothreonine is present on T181. Residues 310-380 (AAKKEKQPKK…ANGGANPFED (71 aa)) form a disordered region. Positions 311 to 321 (AKKEKQPKKAE) are enriched in basic and acidic residues. Over residues 326–348 (SNATGAVESTSQAGDRGSVSSYD) the composition is skewed to polar residues. Phosphoserine is present on residues S343, S345, S346, S358, and S362. The 60-residue stretch at 382–441 (AKGVRVRALYDYDGQEQDELSFKAGDELTKLGEEDEQGWCRGRLDSGQLGLYPANYVEAI) folds into the SH3 domain. Y391 bears the Phosphotyrosine mark. 2 positions are modified to phosphoserine: S402 and S427.

It belongs to the PACSIN family. As to quaternary structure, homodimer. May form heterooligomers with other PACSINs. Interacts with MAPT. Interacts with TRPV4. Interacts (via SH3 domain) with SYNJ1 and WASL. Interacts (via SH3 domain) with DNM1; the interaction is reduced by DNM1 phosphorylation. Interacts with DNM2 and DNM3. Interacts with both COBL and DBNL. Identified in a complex composed of COBL, PACSIN1 and WASL. Interacts with EHD1 and EHD3. Phosphorylated by casein kinase 2 (CK2) and protein kinase C (PKC). Highly expressed in brain (at protein level).

The protein resides in the cytoplasm. It localises to the cell projection. Its subcellular location is the synapse. The protein localises to the synaptosome. It is found in the ruffle membrane. The protein resides in the membrane. It localises to the cytoplasmic vesicle membrane. Its subcellular location is the cytosol. The protein localises to the cell membrane. Functionally, binds to membranes via its F-BAR domain and mediates membrane tubulation. Plays a role in the reorganization of the microtubule cytoskeleton via its interaction with MAPT; this decreases microtubule stability and inhibits MAPT-induced microtubule polymerization. Plays a role in cellular transport processes by recruiting DNM1, DNM2 and DNM3 to membranes. Plays a role in the reorganization of the actin cytoskeleton and in neuron morphogenesis via its interaction with COBL and WASL, and by recruiting COBL to the cell cortex. Plays a role in the regulation of neurite formation, neurite branching and the regulation of neurite length. Required for normal synaptic vesicle endocytosis; this process retrieves previously released neurotransmitters to accommodate multiple cycles of neurotransmission. Required for normal excitatory and inhibitory synaptic transmission. This chain is Protein kinase C and casein kinase substrate in neurons protein 1 (Pacsin1), found in Rattus norvegicus (Rat).